Here is a 37-residue protein sequence, read N- to C-terminus: Alpha-conotoxin TxID (37 aa).

Residues 1–21 (FDGRNAAGNDKMSALMALTTR) constitute a propeptide that is removed on maturation. 2 cysteine pairs are disulfide-bonded: C23/C29 and C24/C36. C36 bears the Cysteine amide mark.

This sequence belongs to the conotoxin A superfamily. Post-translationally, unmodified Met-32 is essential for toxin binding to rat alpha-3-beta-4/CHRNA3-CHRNB4 nAChR. An oxidation of this methionine provokes a 13.3-fold decrease in inhibitory potency (IC(50)=245 nM instead of 18 nM). Owing to its potent activity, derivatives of this toxin have a potential in the development of a novel drug. Unfortunately, the oxidation of the methionine is readily to happen during toxin synthesis and oxidation steps as well as under oxidative environment in vivo, which should still be considered to find a solution to this major drawback. As to expression, expressed by the venom duct.

The protein localises to the secreted. In terms of biological role, alpha-conotoxins act on postsynaptic membranes, they bind to the nicotinic acetylcholine receptors (nAChR) and thus inhibit them. This toxin inhibits alpha-3-beta-4/CHRNA3-CHRNB4 (IC(50)=3.6-18.38 nM), alpha-6/alpha-3-beta-4 (CHRNA6/CHRNA3-CHRNB4) (IC(50)=33.9-94.1 nM), and alpha-2-beta-4/CHRNA2-CHRNB4 (IC(50)=4550 nM) nAChRs. The toxin competes with agonists in the orthosteric binding site of alpha-3-beta-4/CHRNA3-CHRNB4 and alpha-6-beta-4/CHRNA6-CHRNB4. The sequence is that of Alpha-conotoxin TxID from Conus textile (Cloth-of-gold cone).